A 70-amino-acid chain; its full sequence is SLLQLRKMIKKMTNKEPILSYSKYGCNCGMAGRGKPVDATDXCCXXHDCCYGKVTSCSTKADSYSYSWEE.

Cys28 and Cys44 are disulfide-bonded. The active site involves His47. A Ca(2+)-binding site is contributed by Asp48.

It belongs to the phospholipase A2 family. Group II subfamily. D49 sub-subfamily. It depends on Ca(2+) as a cofactor. Expressed by the venom gland.

The protein localises to the secreted. The enzyme catalyses a 1,2-diacyl-sn-glycero-3-phosphocholine + H2O = a 1-acyl-sn-glycero-3-phosphocholine + a fatty acid + H(+). Its function is as follows. Snake venom phospholipase A2 (PLA2) that exhibits strong myotoxicity. PLA2 catalyzes the calcium-dependent hydrolysis of the 2-acyl groups in 3-sn-phosphoglycerides. This is Basic phospholipase A2 2 from Trimeresurus stejnegeri (Chinese green tree viper).